A 173-amino-acid chain; its full sequence is Endoribonuclease YbeY (173 aa).

Zn(2+) is bound by residues His-126, His-130, and His-136.

It belongs to the endoribonuclease YbeY family. Zn(2+) serves as cofactor.

It is found in the cytoplasm. Single strand-specific metallo-endoribonuclease involved in late-stage 70S ribosome quality control and in maturation of the 3' terminus of the 16S rRNA. This Sinorhizobium fredii (strain NBRC 101917 / NGR234) protein is Endoribonuclease YbeY.